The sequence spans 350 residues: METNILELRNISKQYDGKVVLKGINLNIKEGEFVTLLGPSGCGKTTTLRIIAGFEQPNSGELLFLGKDYLKTPVHKREVNTVFQNYALFPHLTVFDNIAYGLKVKRNKYDVIETEVKKFLQLVGLEGFEDKSVEQLSGGQRQRVALARALINKPRVLLLDEPMAALDVKLRKKMQAELKALQGEIGITFILVTHDQEEALTLSDRIIVMNDGAIQQVGTPAEIYNEPENLWTAQFIGDSNIISNAIFIKDNLVTIDGKKIVCVDRGFGENENQIDIIIRPEDIDIVPVGKGFFTGTVKRVNFKGVHWEIIVKCKERKYLIHSTDRVEEGDQVDISWNVEDIHVMWKEIDD.

One can recognise an ABC transporter domain in the interval 6 to 236; the sequence is LELRNISKQY…PENLWTAQFI (231 aa). Position 38–45 (38–45) interacts with ATP; it reads GPSGCGKT.

It belongs to the ABC transporter superfamily. Spermidine/putrescine importer (TC 3.A.1.11.1) family. As to quaternary structure, the complex is composed of two ATP-binding proteins (PotA), two transmembrane proteins (PotB and PotC) and a solute-binding protein (PotD).

It localises to the cell membrane. It carries out the reaction ATP + H2O + polyamine-[polyamine-binding protein]Side 1 = ADP + phosphate + polyamineSide 2 + [polyamine-binding protein]Side 1.. Part of the ABC transporter complex PotABCD involved in spermidine/putrescine import. Responsible for energy coupling to the transport system. The sequence is that of Spermidine/putrescine import ATP-binding protein PotA from Spiroplasma citri.